The primary structure comprises 474 residues: tRNA-2-methylthio-N(6)-dimethylallyladenosine synthase (474 aa).

The 118-residue stretch at 3 to 120 (KKLHIKTWGC…LPEMIEQVRR (118 aa)) folds into the MTTase N-terminal domain. [4Fe-4S] cluster is bound by residues C12, C49, C83, C157, C161, and C164. In terms of domain architecture, Radical SAM core spans 143–375 (RAEGPTAFVS…QDRITQQAMR (233 aa)). The TRAM domain maps to 378 to 441 (RHMMGTVQRI…TNSLRGVFIR (64 aa)).

Belongs to the methylthiotransferase family. MiaB subfamily. Monomer. The cofactor is [4Fe-4S] cluster.

It localises to the cytoplasm. It carries out the reaction N(6)-dimethylallyladenosine(37) in tRNA + (sulfur carrier)-SH + AH2 + 2 S-adenosyl-L-methionine = 2-methylsulfanyl-N(6)-dimethylallyladenosine(37) in tRNA + (sulfur carrier)-H + 5'-deoxyadenosine + L-methionine + A + S-adenosyl-L-homocysteine + 2 H(+). In terms of biological role, catalyzes the methylthiolation of N6-(dimethylallyl)adenosine (i(6)A), leading to the formation of 2-methylthio-N6-(dimethylallyl)adenosine (ms(2)i(6)A) at position 37 in tRNAs that read codons beginning with uridine. The polypeptide is tRNA-2-methylthio-N(6)-dimethylallyladenosine synthase (Shewanella baltica (strain OS185)).